We begin with the raw amino-acid sequence, 234 residues long: Sugar fermentation stimulation protein A (234 aa).

Residues 201–220 (LLSEAQNKGVEVLAYKAELS) constitute a DNA-binding region (H-T-H motif).

This sequence belongs to the SfsA family.

Its function is as follows. Binds to DNA non-specifically. Could be a regulatory factor involved in maltose metabolism. The polypeptide is Sugar fermentation stimulation protein A (Salmonella gallinarum (strain 287/91 / NCTC 13346)).